The chain runs to 461 residues: MNTSHKTLKTIAILGQPNVGKSSLFNRLARERIAITSDFAGTTRDINKRKIALNGYEVELLDTGGMAKDALLSKEIKALNLKAAQMSDLILYVVDGKSIPSDEDIKLFREVFKINPNCFLVINKIDNDKEKERAYAFSSFGMPKSFNISVSHNRGISALIDAVLSALNLNKIIEQDLDADILESLENNALEEETKEEEIIQVGIIGRVNVGKSSLLNALTKKERSLVSSVAGTTIDPIDETILIGDQKICFVDTAGIRHRSKILGIEKYALERTQKALEKSHIALLVLDVSAPFVELDEKISSLADKHSLGIILILNKWDIRYAPYEEIMETLKRKFRFLEYAPVITTSCLKARHIDEIKHKIIEVYECFSKRIPTSLLNSVISQATQKHPLPSDGGKLVKVYYATQFATKPPQISLIMNRPKALHFSYKRYLINTLRKEFNFLGTPLILNAKDKKSAQQN.

EngA-type G domains lie at 9-171 (KTIA…NLNK) and 200-371 (IQVG…ECFS). GTP is bound by residues 15 to 22 (GQPNVGKS), 62 to 66 (DTGGM), 123 to 126 (NKID), 206 to 213 (GRVNVGKS), 253 to 257 (DTAGI), and 317 to 320 (NKWD). The 85-residue stretch at 372–456 (KRIPTSLLNS…PLILNAKDKK (85 aa)) folds into the KH-like domain.

This sequence belongs to the TRAFAC class TrmE-Era-EngA-EngB-Septin-like GTPase superfamily. EngA (Der) GTPase family. As to quaternary structure, associates with the 50S ribosomal subunit.

Functionally, GTPase that plays an essential role in the late steps of ribosome biogenesis. This Helicobacter pylori (strain HPAG1) protein is GTPase Der.